A 241-amino-acid polypeptide reads, in one-letter code: Probable transcriptional regulatory protein SAR11_0592 (241 aa).

The disordered stretch occupies residues 1-24 (MSGHSKWASIKHSKGKADKQRSKV).

It belongs to the TACO1 family.

It localises to the cytoplasm. In Pelagibacter ubique (strain HTCC1062), this protein is Probable transcriptional regulatory protein SAR11_0592.